The following is a 138-amino-acid chain: PilB-specific inhibitory protein CpiA (138 aa).

In terms of assembly, interacts with PilB but not with TfpB.

In terms of biological role, acts as a PilB inhibitor to control natural transformation. Inhibits type IV pili (T4P) extension by specifically binding and inhibiting the pilus extension ATPase PilB but not TfpB. This activity probably modulates T4P extension under different environmental conditions. In Acinetobacter baylyi (strain ATCC 33305 / BD413 / ADP1), this protein is PilB-specific inhibitory protein CpiA.